The following is a 359-amino-acid chain: Bergaptol O-methyltransferase (359 aa).

Position 126 (His-126) interacts with bergaptol. Residues Ser-179, Gly-203, Asp-226, Asp-246, and Lys-260 each coordinate S-adenosyl-L-homocysteine. A bergaptol-binding site is contributed by His-264. His-264 (proton acceptor) is an active-site residue.

The protein belongs to the class I-like SAM-binding methyltransferase superfamily. Cation-independent O-methyltransferase family. COMT subfamily. As to quaternary structure, homodimer. As to expression, mostly expressed in roots and, to a lower extent, in stems and leaves.

It is found in the cytoplasm. It catalyses the reaction bergaptol + S-adenosyl-L-methionine = bergapten + S-adenosyl-L-homocysteine. Its pathway is aromatic compound metabolism. It participates in secondary metabolite biosynthesis. Its function is as follows. O-methyltransferase involved in the biosynthesis of furocoumarins natural products such as bergapten, a photosensitizer used for medical purpose such as treating psoriasis and vitiligo or facilitating resistance to microbial infection and other stresses. Catalyzes specifically the methylation of bergaptol. Not active on xanthotol, isoscopoletin, scopoletin and esculetin. This Kitagawia praeruptora (Peucedanum praeruptorum) protein is Bergaptol O-methyltransferase.